Here is a 279-residue protein sequence, read N- to C-terminus: Fatty acid metabolism regulator protein (279 aa).

The region spanning 6–74 (KSPAGFAEKY…HGKPTKVNQF (69 aa)) is the HTH gntR-type domain. Positions 34-53 (ERELSELIGVTRTTLREVLQ) form a DNA-binding region, H-T-H motif.

Homodimer.

It localises to the cytoplasm. Multifunctional regulator of fatty acid metabolism. The protein is Fatty acid metabolism regulator protein of Vibrio cholerae serotype O1 (strain ATCC 39541 / Classical Ogawa 395 / O395).